The sequence spans 216 residues: Probable GTP-binding protein EngB (216 aa).

Positions 24–205 (ATPEIAFVGR…WARLAALAAE (182 aa)) constitute an EngB-type G domain. GTP contacts are provided by residues 32–39 (GRSNVGKS), 59–63 (GRTRA), 86–89 (DLPG), 153–156 (TKTD), and 184–186 (FSA). Mg(2+)-binding residues include serine 39 and threonine 61.

It belongs to the TRAFAC class TrmE-Era-EngA-EngB-Septin-like GTPase superfamily. EngB GTPase family. Mg(2+) is required as a cofactor.

Necessary for normal cell division and for the maintenance of normal septation. This Anaeromyxobacter dehalogenans (strain 2CP-1 / ATCC BAA-258) protein is Probable GTP-binding protein EngB.